We begin with the raw amino-acid sequence, 212 residues long: Cyclin-dependent kinase inhibitor 3 (212 aa).

The disordered stretch occupies residues 1–24; it reads MKPPISIQASEFDSSDEEPADDEQ. Positions 1–34 are interaction with CDK2; the sequence is MKPPISIQASEFDSSDEEPADDEQTPIQISWLPL. The span at 13-24 shows a compositional bias: acidic residues; sequence DSSDEEPADDEQ. The region spanning 32–201 is the Tyrosine-protein phosphatase domain; sequence LPLSRVNCSQ…FRDKLAAYLS (170 aa). The active-site Phosphocysteine intermediate is cysteine 140.

The protein belongs to the protein-tyrosine phosphatase family. As to quaternary structure, interacts with cyclin-dependent kinases such as CDK1, CDK2 and CDK3. Does not interact with CDK4. Interacts (via C-terminus) with phosphorylated CDK2 (via C-terminal helix). Interacts with MS4A3 (via C-terminus); the interaction enhances CDKN3 enzymatic activity.

Its subcellular location is the cytoplasm. It is found in the perinuclear region. It carries out the reaction O-phospho-L-tyrosyl-[protein] + H2O = L-tyrosyl-[protein] + phosphate. The enzyme catalyses O-phospho-L-seryl-[protein] + H2O = L-seryl-[protein] + phosphate. It catalyses the reaction O-phospho-L-threonyl-[protein] + H2O = L-threonyl-[protein] + phosphate. May play a role in cell cycle regulation. Dual specificity phosphatase active toward substrates containing either phosphotyrosine or phosphoserine residues. Dephosphorylates CDK2 at 'Thr-160' in a cyclin-dependent manner. The protein is Cyclin-dependent kinase inhibitor 3 of Rattus norvegicus (Rat).